We begin with the raw amino-acid sequence, 316 residues long: Probable cell division protein WhiA (316 aa).

Positions 274–308 form a DNA-binding region, H-T-H motif; sequence SLKELGEMVSTGVISKSGVNHRLRKIDEIAEKLRN.

It belongs to the WhiA family.

Its function is as follows. Involved in cell division and chromosome segregation. The protein is Probable cell division protein WhiA of Macrococcus caseolyticus (strain JCSC5402) (Macrococcoides caseolyticum).